A 323-amino-acid chain; its full sequence is Ribonuclease Z (323 aa).

Zn(2+) contacts are provided by histidine 62, histidine 64, aspartate 66, histidine 67, histidine 140, aspartate 211, and histidine 270. Aspartate 66 serves as the catalytic Proton acceptor.

Belongs to the RNase Z family. As to quaternary structure, homodimer. Requires Zn(2+) as cofactor.

It carries out the reaction Endonucleolytic cleavage of RNA, removing extra 3' nucleotides from tRNA precursor, generating 3' termini of tRNAs. A 3'-hydroxy group is left at the tRNA terminus and a 5'-phosphoryl group is left at the trailer molecule.. Its function is as follows. Zinc phosphodiesterase, which displays some tRNA 3'-processing endonuclease activity. Probably involved in tRNA maturation, by removing a 3'-trailer from precursor tRNA. This chain is Ribonuclease Z, found in Marinobacter nauticus (strain ATCC 700491 / DSM 11845 / VT8) (Marinobacter aquaeolei).